Consider the following 182-residue polypeptide: pEARLI1-like lipid transfer protein 2 (182 aa).

A signal peptide spans 1–25; that stretch reads MASKNSASLALFFALNILFFTLTAG. Residues 33 to 92 are compositionally biased toward pro residues; that stretch reads SPKPRPLPNPKVPSPKVPTPSVPSPYVPTPSVPSPSVPTPSVPSPSVPSPNPTPVIPPRT. The interval 33 to 94 is disordered; the sequence is SPKPRPLPNP…TPVIPPRTPG (62 aa). 7 repeat units span residues 42–46, 47–51, 52–56, 62–66, 67–71, 72–76, and 77–81. A 7 X 5 AA repeats of P-[KS]-V-P-[ST] region spans residues 42-81; it reads PKVPSPKVPTPSVPSPYVPTPSVPSPSVPTPSVPSPSVPS.

This sequence belongs to the plant LTP family. PEARLI1 subfamily.

It localises to the secreted. The protein resides in the cell wall. In terms of biological role, probable lipid transfer protein (LTP). May improve freezing survival. Seems to control the flowering process and lignin synthesis. Confers resistance to Botrytis cinerea. This Arabidopsis thaliana (Mouse-ear cress) protein is pEARLI1-like lipid transfer protein 2.